A 259-amino-acid chain; its full sequence is Protein FAM220A (259 aa).

Disordered regions lie at residues 1–44 and 131–154; these read MRDR…ADAP and LGGG…RVSR. The span at 138–152 shows a compositional bias: basic and acidic residues; that stretch reads TDGHRGQCPKGEPRV.

As to quaternary structure, interacts with transcriptional activator STAT3; the interaction occurs in both the nucleus and the cytoplasm, is enhanced by IL6 and promotes STAT3 dephosphorylation, leading to negative regulation of STAT3 transcriptional activator activity. Can interact with both unphosphorylated and phosphorylated STAT3 but interacts preferentially with phosphorylated STAT3 in the nucleus. Interacts with protein phosphatase PTPN2/TC45; this promotes interaction of PTPN2 with STAT3, leading to dephosphorylation of STAT3 by PTPN2.

The protein localises to the nucleus. It localises to the cytoplasm. It is found in the cytoplasmic vesicle. The protein resides in the secretory vesicle. Its subcellular location is the acrosome. In terms of biological role, promotes dephosphorylation of transcriptional activator STAT3 by interacting with both STAT3 and protein phosphatase PTPN2. This promotes interaction of PTPN2 with STAT3 and mediates STAT3 dephosphorylation by PTPN2, leading to negative regulation of STAT3 transcriptional activator activity. May be required for spermiogenesis or sperm function. The polypeptide is Protein FAM220A (Homo sapiens (Human)).